The primary structure comprises 218 residues: Probable GTP-binding protein EngB (218 aa).

Residues Val-31–Pro-205 enclose the EngB-type G domain. Residues Gly-39–Ser-46, Gly-66–Leu-70, Asp-84–Gly-87, Thr-151–Asp-154, and Phe-184–Ser-186 each bind GTP. Residues Ser-46 and Thr-68 each coordinate Mg(2+).

This sequence belongs to the TRAFAC class TrmE-Era-EngA-EngB-Septin-like GTPase superfamily. EngB GTPase family. Mg(2+) serves as cofactor.

In terms of biological role, necessary for normal cell division and for the maintenance of normal septation. The chain is Probable GTP-binding protein EngB from Shewanella loihica (strain ATCC BAA-1088 / PV-4).